We begin with the raw amino-acid sequence, 340 residues long: Cytochrome P450 monooxygenase cheG (340 aa).

The N-linked (GlcNAc...) asparagine glycan is linked to Asn25. The helical transmembrane segment at 37 to 57 threads the bilayer; that stretch reads MLLGIPTVILSLTPAVLRLLI. Position 283 (Cys283) interacts with heme. The interval 308–340 is disordered; the sequence is LPPGQGKPEKGSMPNGSMSPDTKAKVLFRSRKL. The N-linked (GlcNAc...) asparagine glycan is linked to Asn322.

The protein belongs to the cytochrome P450 family. The cofactor is heme.

Its subcellular location is the membrane. Its pathway is secondary metabolite biosynthesis. Functionally, cytochrome P450 monooxygenase; part of the gene cluster that mediates the biosynthesis of chaetoglobosin A which has a unique inhibitory activity against actin polymerization in mammalian cells. Chaetoglobosin A and its intermediates are involved in the morphological differentiation of C.globosum. The first step of the pathway is the synthesis of prochaetoglobosin I via condensation of one acetyl-CoA, 8 malonyl-CoA, and a L-tryptophan molecule by the PKS-NRPS hybrid synthetase cheA, followed by reduction of backbone double bond to install desired geometry by the enoyl reductase cheB. Further multiple oxidation steps performed by the cytochrome P450 monooxygenases cheE and cheG, as well as by the FAD-linked oxidoreductase cheF, lead to the formation of chaetoglobosin A. Depending on the order of action of these reductases, distinct intermediates can be identified. Within the pathway, the cytochrome P450 monooxygenase cheE catalyzes a stereospecific epoxidation on prochaetoglobosin I, cytoglobosin D, and chaetoglobosin J intermediates. The FAD-linked oxidoreductase cheF performs dehydrogenation of the C-20 hydroxyl groups in the 20-dihyrochaetoglobosin A and cytoglobosin D intermediates. Finally, the cytochrome P450 monooxygenase cheG can catalyze the stereospecific dihydroxylation of prochaetoglobosin I and prochaetoglobosin IV at C-19 and C-20, respectively. The Diels-Alderase cheD may play a role in the post-PKS-NRPS biosynthetic steps catalyzing Diels-Alder cyclization. In Chaetomium globosum (strain ATCC 6205 / CBS 148.51 / DSM 1962 / NBRC 6347 / NRRL 1970) (Soil fungus), this protein is Cytochrome P450 monooxygenase cheG.